We begin with the raw amino-acid sequence, 296 residues long: Ribosomal RNA small subunit methyltransferase H (296 aa).

S-adenosyl-L-methionine-binding positions include 38–40, Glu57, Phe80, Asp103, and His110; that span reads GVH.

This sequence belongs to the methyltransferase superfamily. RsmH family.

The protein resides in the cytoplasm. The catalysed reaction is cytidine(1402) in 16S rRNA + S-adenosyl-L-methionine = N(4)-methylcytidine(1402) in 16S rRNA + S-adenosyl-L-homocysteine + H(+). Its function is as follows. Specifically methylates the N4 position of cytidine in position 1402 (C1402) of 16S rRNA. The protein is Ribosomal RNA small subunit methyltransferase H of Borreliella burgdorferi (strain ATCC 35210 / DSM 4680 / CIP 102532 / B31) (Borrelia burgdorferi).